The primary structure comprises 126 residues: Large ribosomal subunit protein bL12 (126 aa).

It belongs to the bacterial ribosomal protein bL12 family. As to quaternary structure, homodimer. Part of the ribosomal stalk of the 50S ribosomal subunit. Forms a multimeric L10(L12)X complex, where L10 forms an elongated spine to which 2 to 4 L12 dimers bind in a sequential fashion. Binds GTP-bound translation factors.

In terms of biological role, forms part of the ribosomal stalk which helps the ribosome interact with GTP-bound translation factors. Is thus essential for accurate translation. The sequence is that of Large ribosomal subunit protein bL12 from Geotalea daltonii (strain DSM 22248 / JCM 15807 / FRC-32) (Geobacter daltonii).